The following is a 616-amino-acid chain: Dihydroxy-acid dehydratase (616 aa).

Residue Asp-81 coordinates Mg(2+). Cys-122 is a [2Fe-2S] cluster binding site. Residues Asp-123 and Lys-124 each coordinate Mg(2+). The residue at position 124 (Lys-124) is an N6-carboxylysine. A [2Fe-2S] cluster-binding site is contributed by Cys-195. Glu-491 serves as a coordination point for Mg(2+). Ser-517 serves as the catalytic Proton acceptor.

It belongs to the IlvD/Edd family. In terms of assembly, homodimer. Requires [2Fe-2S] cluster as cofactor. The cofactor is Mg(2+).

It carries out the reaction (2R)-2,3-dihydroxy-3-methylbutanoate = 3-methyl-2-oxobutanoate + H2O. The enzyme catalyses (2R,3R)-2,3-dihydroxy-3-methylpentanoate = (S)-3-methyl-2-oxopentanoate + H2O. Its pathway is amino-acid biosynthesis; L-isoleucine biosynthesis; L-isoleucine from 2-oxobutanoate: step 3/4. The protein operates within amino-acid biosynthesis; L-valine biosynthesis; L-valine from pyruvate: step 3/4. Its function is as follows. Functions in the biosynthesis of branched-chain amino acids. Catalyzes the dehydration of (2R,3R)-2,3-dihydroxy-3-methylpentanoate (2,3-dihydroxy-3-methylvalerate) into 2-oxo-3-methylpentanoate (2-oxo-3-methylvalerate) and of (2R)-2,3-dihydroxy-3-methylbutanoate (2,3-dihydroxyisovalerate) into 2-oxo-3-methylbutanoate (2-oxoisovalerate), the penultimate precursor to L-isoleucine and L-valine, respectively. The sequence is that of Dihydroxy-acid dehydratase from Escherichia coli O1:K1 / APEC.